A 121-amino-acid polypeptide reads, in one-letter code: Large ribosomal subunit protein bL12 (121 aa).

This sequence belongs to the bacterial ribosomal protein bL12 family. Homodimer. Part of the ribosomal stalk of the 50S ribosomal subunit. Forms a multimeric L10(L12)X complex, where L10 forms an elongated spine to which 2 to 4 L12 dimers bind in a sequential fashion. Binds GTP-bound translation factors.

Forms part of the ribosomal stalk which helps the ribosome interact with GTP-bound translation factors. Is thus essential for accurate translation. The polypeptide is Large ribosomal subunit protein bL12 (Clostridium perfringens (strain ATCC 13124 / DSM 756 / JCM 1290 / NCIMB 6125 / NCTC 8237 / Type A)).